The sequence spans 326 residues: tRNA N6-adenosine threonylcarbamoyltransferase (326 aa).

His111 and His115 together coordinate Fe cation. Substrate is bound by residues 134–138 (TVSGG), Asp167, Gly180, Asp184, and Asn268. Asp293 contributes to the Fe cation binding site.

It belongs to the KAE1 / TsaD family. The cofactor is Fe(2+).

Its subcellular location is the cytoplasm. The catalysed reaction is L-threonylcarbamoyladenylate + adenosine(37) in tRNA = N(6)-L-threonylcarbamoyladenosine(37) in tRNA + AMP + H(+). Its function is as follows. Required for the formation of a threonylcarbamoyl group on adenosine at position 37 (t(6)A37) in tRNAs that read codons beginning with adenine. Is involved in the transfer of the threonylcarbamoyl moiety of threonylcarbamoyl-AMP (TC-AMP) to the N6 group of A37, together with TsaE and TsaB. TsaD likely plays a direct catalytic role in this reaction. The polypeptide is tRNA N6-adenosine threonylcarbamoyltransferase (Dehalococcoides mccartyi (strain ATCC BAA-2100 / JCM 16839 / KCTC 5957 / BAV1)).